Reading from the N-terminus, the 297-residue chain is Light-independent protochlorophyllide reductase iron-sulfur ATP-binding protein (297 aa).

Residues 41–46 (GIGKST) and K70 contribute to the ATP site. S45 is a Mg(2+) binding site. The [4Fe-4S] cluster site is built by C126 and C160. ATP-binding positions include 211–212 (NR) and 235–237 (PDL).

This sequence belongs to the NifH/BchL/ChlL family. As to quaternary structure, homodimer. Protochlorophyllide reductase is composed of three subunits; BchL, BchN and BchB. [4Fe-4S] cluster serves as cofactor.

The catalysed reaction is chlorophyllide a + oxidized 2[4Fe-4S]-[ferredoxin] + 2 ADP + 2 phosphate = protochlorophyllide a + reduced 2[4Fe-4S]-[ferredoxin] + 2 ATP + 2 H2O. Its pathway is porphyrin-containing compound metabolism; bacteriochlorophyll biosynthesis (light-independent). Its function is as follows. Component of the dark-operative protochlorophyllide reductase (DPOR) that uses Mg-ATP and reduced ferredoxin to reduce ring D of protochlorophyllide (Pchlide) to form chlorophyllide a (Chlide). This reaction is light-independent. The L component serves as a unique electron donor to the NB-component of the complex, and binds Mg-ATP. This Cereibacter sphaeroides (strain KD131 / KCTC 12085) (Rhodobacter sphaeroides) protein is Light-independent protochlorophyllide reductase iron-sulfur ATP-binding protein.